The sequence spans 413 residues: Argininosuccinate synthase (413 aa).

Position 22 to 30 (22 to 30 (AYSGGLDTS)) interacts with ATP. Residues Tyr100 and Ser105 each coordinate L-citrulline. Gly130 is an ATP binding site. L-aspartate-binding residues include Thr132, Asn136, and Asp137. An L-citrulline-binding site is contributed by Asn136. Arg140, Ser189, Ser198, Glu274, and Tyr286 together coordinate L-citrulline.

Belongs to the argininosuccinate synthase family. Type 1 subfamily. As to quaternary structure, homotetramer.

Its subcellular location is the cytoplasm. It carries out the reaction L-citrulline + L-aspartate + ATP = 2-(N(omega)-L-arginino)succinate + AMP + diphosphate + H(+). It functions in the pathway amino-acid biosynthesis; L-arginine biosynthesis; L-arginine from L-ornithine and carbamoyl phosphate: step 2/3. This is Argininosuccinate synthase from Endomicrobium trichonymphae.